The chain runs to 266 residues: UPF0246 protein PHZ_c0561 (266 aa).

The interval 245–266 (DEEFTFARPQPPPPAASRNKED) is disordered.

This sequence belongs to the UPF0246 family.

This Phenylobacterium zucineum (strain HLK1) protein is UPF0246 protein PHZ_c0561.